The primary structure comprises 143 residues: Large ribosomal subunit protein uL11 (143 aa).

The protein belongs to the universal ribosomal protein uL11 family. Part of the ribosomal stalk of the 50S ribosomal subunit. Interacts with L10 and the large rRNA to form the base of the stalk. L10 forms an elongated spine to which L12 dimers bind in a sequential fashion forming a multimeric L10(L12)X complex. One or more lysine residues are methylated.

Functionally, forms part of the ribosomal stalk which helps the ribosome interact with GTP-bound translation factors. The sequence is that of Large ribosomal subunit protein uL11 from Clavibacter sepedonicus (Clavibacter michiganensis subsp. sepedonicus).